Here is an 860-residue protein sequence, read N- to C-terminus: Leucine--tRNA ligase (860 aa).

The 'HIGH' region signature appears at 42–52 (PYPSGRLHMGH). A 'KMSKS' region motif is present at residues 619-623 (KMSKS). Lys622 provides a ligand contact to ATP.

This sequence belongs to the class-I aminoacyl-tRNA synthetase family.

The protein resides in the cytoplasm. The catalysed reaction is tRNA(Leu) + L-leucine + ATP = L-leucyl-tRNA(Leu) + AMP + diphosphate. In Salmonella choleraesuis (strain SC-B67), this protein is Leucine--tRNA ligase.